Reading from the N-terminus, the 203-residue chain is Protein GrpE 2 (203 aa).

Residues 1–12 (MPTRPQEPDRAA) show a composition bias toward basic and acidic residues. The disordered stretch occupies residues 1-64 (MPTRPQEPDR…APAEDEYTTA (64 aa)). The span at 45–56 (GEPGPDAAGPAP) shows a compositional bias: low complexity.

This sequence belongs to the GrpE family. As to quaternary structure, homodimer.

The protein resides in the cytoplasm. In terms of biological role, participates actively in the response to hyperosmotic and heat shock by preventing the aggregation of stress-denatured proteins, in association with DnaK and GrpE. It is the nucleotide exchange factor for DnaK and may function as a thermosensor. Unfolded proteins bind initially to DnaJ; upon interaction with the DnaJ-bound protein, DnaK hydrolyzes its bound ATP, resulting in the formation of a stable complex. GrpE releases ADP from DnaK; ATP binding to DnaK triggers the release of the substrate protein, thus completing the reaction cycle. Several rounds of ATP-dependent interactions between DnaJ, DnaK and GrpE are required for fully efficient folding. The sequence is that of Protein GrpE 2 from Streptomyces avermitilis (strain ATCC 31267 / DSM 46492 / JCM 5070 / NBRC 14893 / NCIMB 12804 / NRRL 8165 / MA-4680).